We begin with the raw amino-acid sequence, 367 residues long: bZIP transcription factor 18 (367 aa).

Residues Met-1 to Gly-57 are disordered. Residues His-38–Glu-47 are compositionally biased toward basic and acidic residues. Ser-70 carries the post-translational modification Phosphoserine. Residues Ser-79–Ser-124 form a disordered region. Over residues Gly-82–Asp-96 the composition is skewed to low complexity. Positions Asp-148–Leu-211 constitute a bZIP domain. The tract at residues Lys-150–Arg-171 is basic motif. The stretch at Lys-166–Glu-245 forms a coiled coil. A leucine-zipper region spans residues Leu-176 to Leu-190. 3 stretches are compositionally biased toward polar residues: residues Gln-294–Thr-309, Ala-317–Tyr-328, and Phe-354–Met-367. Disordered stretches follow at residues Gln-294 to Glu-330 and Leu-343 to Met-367.

As to quaternary structure, interacts with NEAP1. Forms homodimer and heterodimer with bZIP34 and bZIP61. As to expression, ubiquitous. Strongly expressed in mature pollen.

It localises to the nucleus. The protein localises to the nucleoplasm. The protein resides in the cytoplasm. Its subcellular location is the perinuclear region. In terms of biological role, transcription factor that may participate with bZIP34 in the gametophytic control of pollen development. This chain is bZIP transcription factor 18, found in Arabidopsis thaliana (Mouse-ear cress).